Here is a 329-residue protein sequence, read N- to C-terminus: GTP 3',8-cyclase (329 aa).

The Radical SAM core domain maps to 8-234 (AFARKFYYLR…QLRQRSDGPA (227 aa)). Arginine 17 serves as a coordination point for GTP. Residues cysteine 24 and cysteine 28 each coordinate [4Fe-4S] cluster. S-adenosyl-L-methionine is bound at residue tyrosine 30. Cysteine 31 is a [4Fe-4S] cluster binding site. Arginine 68 is a binding site for GTP. Residue glycine 72 participates in S-adenosyl-L-methionine binding. Residue threonine 99 participates in GTP binding. Serine 123 is a binding site for S-adenosyl-L-methionine. Lysine 160 lines the GTP pocket. Methionine 194 contacts S-adenosyl-L-methionine. Residues cysteine 257 and cysteine 260 each coordinate [4Fe-4S] cluster. 262–264 (RLR) is a GTP binding site. Residue cysteine 274 participates in [4Fe-4S] cluster binding.

Belongs to the radical SAM superfamily. MoaA family. Monomer and homodimer. [4Fe-4S] cluster is required as a cofactor.

The catalysed reaction is GTP + AH2 + S-adenosyl-L-methionine = (8S)-3',8-cyclo-7,8-dihydroguanosine 5'-triphosphate + 5'-deoxyadenosine + L-methionine + A + H(+). It functions in the pathway cofactor biosynthesis; molybdopterin biosynthesis. Its function is as follows. Catalyzes the cyclization of GTP to (8S)-3',8-cyclo-7,8-dihydroguanosine 5'-triphosphate. This Shigella sonnei (strain Ss046) protein is GTP 3',8-cyclase.